We begin with the raw amino-acid sequence, 171 residues long: 3-hydroxydecanoyl-[acyl-carrier-protein] dehydratase (171 aa).

The active site involves H71.

This sequence belongs to the thioester dehydratase family. FabA subfamily. In terms of assembly, homodimer.

Its subcellular location is the cytoplasm. It catalyses the reaction a (3R)-hydroxyacyl-[ACP] = a (2E)-enoyl-[ACP] + H2O. The catalysed reaction is (3R)-hydroxydecanoyl-[ACP] = (2E)-decenoyl-[ACP] + H2O. The enzyme catalyses (2E)-decenoyl-[ACP] = (3Z)-decenoyl-[ACP]. It functions in the pathway lipid metabolism; fatty acid biosynthesis. Necessary for the introduction of cis unsaturation into fatty acids. Catalyzes the dehydration of (3R)-3-hydroxydecanoyl-ACP to E-(2)-decenoyl-ACP and then its isomerization to Z-(3)-decenoyl-ACP. Can catalyze the dehydratase reaction for beta-hydroxyacyl-ACPs with saturated chain lengths up to 16:0, being most active on intermediate chain length. The sequence is that of 3-hydroxydecanoyl-[acyl-carrier-protein] dehydratase from Hamiltonella defensa subsp. Acyrthosiphon pisum (strain 5AT).